Consider the following 442-residue polypeptide: Proline--tRNA ligase (442 aa).

It belongs to the class-II aminoacyl-tRNA synthetase family. ProS type 2 subfamily. As to quaternary structure, homodimer.

It localises to the cytoplasm. It catalyses the reaction tRNA(Pro) + L-proline + ATP = L-prolyl-tRNA(Pro) + AMP + diphosphate. Catalyzes the attachment of proline to tRNA(Pro) in a two-step reaction: proline is first activated by ATP to form Pro-AMP and then transferred to the acceptor end of tRNA(Pro). In Sinorhizobium medicae (strain WSM419) (Ensifer medicae), this protein is Proline--tRNA ligase.